The sequence spans 193 residues: MTEYALLFVSILLVNNFVLVKFLGLCPFMGVSKKLETAIGMGMATTFVMTLGSMFSWLINEFILVPLDILYLRTMAFILVLAVVVQFSEMFVRKVSPELYRLLGIFLPLITTNCAVLGVVLLNINLSHGFLQSTIYGFGGAAGFSLVMVLFAAIRERLAVSDIPAPFRGSSIALITAGLMSLAFMGFTGLVKF.

The next 6 helical transmembrane spans lie at 5 to 25, 39 to 59, 62 to 82, 102 to 122, 134 to 154, and 171 to 191; these read ALLF…FLGL, IGMG…SWLI, FILV…LVLA, LLGI…VVLL, TIYG…FAAI, and SIAL…TGLV.

This sequence belongs to the NqrDE/RnfAE family. The complex is composed of six subunits: RnfA, RnfB, RnfC, RnfD, RnfE and RnfG.

It is found in the cell inner membrane. Part of a membrane-bound complex that couples electron transfer with translocation of ions across the membrane. In Pectobacterium atrosepticum (strain SCRI 1043 / ATCC BAA-672) (Erwinia carotovora subsp. atroseptica), this protein is Ion-translocating oxidoreductase complex subunit A.